The chain runs to 62 residues: Potassium channel toxin alpha-KTx 10.1 (62 aa).

A signal peptide spans 1–22; the sequence is MEGIAKITLILLFLFVTMHTFA. The propeptide occupies 23 to 28; that stretch reads NWNTEA. Cystine bridges form between Cys-31–Cys-50, Cys-36–Cys-55, and Cys-40–Cys-57. The residue at position 60 (Tyr-60) is a Tyrosine amide.

Belongs to the short scorpion toxin superfamily. Potassium channel inhibitor family. Alpha-KTx 10 subfamily. In terms of tissue distribution, expressed by the venom gland.

The protein resides in the secreted. Blocks Shaker B (Sh) and voltage-gated potassium-channels Kv1.1/KCNA1, Kv1.2/KCNA2, Kv1.3/KCNA3. Also inhibits small conductance calcium-activated potassium channels (KCNN) and intermediate conductance calcium-activated potassium channel (KCa3.1/KCNN4). The protein is Potassium channel toxin alpha-KTx 10.1 of Centruroides noxius (Mexican scorpion).